We begin with the raw amino-acid sequence, 84 residues long: U8-theraphotoxin-Hhn1c 2 (84 aa).

The N-terminal stretch at 1–21 (MKVVLLVCLVWMMAMMELVSC) is a signal peptide. 5 cysteine pairs are disulfide-bonded: Cys-23–Cys-35, Cys-29–Cys-44, Cys-34–Cys-67, Cys-54–Cys-75, and Cys-69–Cys-81.

Belongs to the AVIT (prokineticin) family. Expressed by the venom gland.

The protein resides in the secreted. The polypeptide is U8-theraphotoxin-Hhn1c 2 (Cyriopagopus hainanus (Chinese bird spider)).